Here is a 469-residue protein sequence, read N- to C-terminus: MMGSRRSRRVSWASGGNLCKVRLFLSEDSPSQAGLRPQDNLQAKGSWLLHAAGPSSDDSLPPGFESLPPSNDLKIDMSQIPLIRWKCPPHIVLEQDWHIVAGEESREIEIQNERINGALEAIYPRPSNIPPNPFLSLDVKDAHYDDSKTLLVPLIPLEDDDASDQLEGPTLDLPSHYNITGVSNTPVSAEQQPPCGGAISSGFTIEPQAAVSATVTAIMQTIQSNQNGSMADQNGSTIDQELLFKILSDPSQLQRLMKECGPVRHEQSASSSVVAPLVSIPPPQITASSPAPFSDHVGTFHGMNPTLPPPPPMMNRPPSTIPSVAMNHPPSSSPAMNFGSALPSSSPSVNFGSVPGRGVGYYKTLIHQHGGERLEQPFEQHGMQFGMYRQPGPPQNGGIDAMNGAAAMVSRDGKVRPMKPCAYFNSPKGCRNGASCTFLHDASAPTRKDHQKQKGSKRIKLDNTMGGRN.

The C3H1-type zinc-finger motif lies at 415-443 (VRPMKPCAYFNSPKGCRNGASCTFLHDAS). Residues 444 to 469 (APTRKDHQKQKGSKRIKLDNTMGGRN) are disordered. Positions 449-458 (DHQKQKGSKR) are enriched in basic residues.

The polypeptide is Zinc finger CCCH domain-containing protein 30 (Oryza sativa subsp. japonica (Rice)).